We begin with the raw amino-acid sequence, 57 residues long: Large ribosomal subunit protein eL20 (57 aa).

This sequence belongs to the eukaryotic ribosomal protein eL20 family. As to quaternary structure, part of the 50S ribosomal subunit. Binds 23S rRNA.

The protein is Large ribosomal subunit protein eL20 of Natronomonas pharaonis (strain ATCC 35678 / DSM 2160 / CIP 103997 / JCM 8858 / NBRC 14720 / NCIMB 2260 / Gabara) (Halobacterium pharaonis).